A 65-amino-acid polypeptide reads, in one-letter code: Large ribosomal subunit protein bL35 (65 aa).

The protein belongs to the bacterial ribosomal protein bL35 family.

The polypeptide is Large ribosomal subunit protein bL35 (Photorhabdus laumondii subsp. laumondii (strain DSM 15139 / CIP 105565 / TT01) (Photorhabdus luminescens subsp. laumondii)).